The chain runs to 204 residues: Octanoyltransferase (204 aa).

The BPL/LPL catalytic domain occupies 27-204 (KNTKDELWIV…LINYVSRNRH (178 aa)). Substrate contacts are provided by residues 66 to 73 (RGGQVTYH), 133 to 135 (ALG), and 146 to 148 (GLS). Cysteine 164 acts as the Acyl-thioester intermediate in catalysis.

Belongs to the LipB family.

The protein resides in the cytoplasm. The catalysed reaction is octanoyl-[ACP] + L-lysyl-[protein] = N(6)-octanoyl-L-lysyl-[protein] + holo-[ACP] + H(+). The protein operates within protein modification; protein lipoylation via endogenous pathway; protein N(6)-(lipoyl)lysine from octanoyl-[acyl-carrier-protein]: step 1/2. Functionally, catalyzes the transfer of endogenously produced octanoic acid from octanoyl-acyl-carrier-protein onto the lipoyl domains of lipoate-dependent enzymes. Lipoyl-ACP can also act as a substrate although octanoyl-ACP is likely to be the physiological substrate. The sequence is that of Octanoyltransferase from Vesicomyosocius okutanii subsp. Calyptogena okutanii (strain HA).